The chain runs to 539 residues: Cytochrome P450 monooxygenase pvhE (539 aa).

A helical membrane pass occupies residues 15-31; sequence VAFCSLVILCILFKVLT. N379 carries an N-linked (GlcNAc...) asparagine glycan. C473 serves as a coordination point for heme.

It belongs to the cytochrome P450 family. Heme serves as cofactor.

Its subcellular location is the membrane. It participates in secondary metabolite biosynthesis. Cytochrome P450 monooxygenase; part of the gene cluster that mediates the biosynthesis of varicidin A, an antifungal natural product containing a cis-octahydrodecalin core. The PKS module of pvhA together with the enoylreductase pvhC catalyze the formation of the polyketide unit which is then conjugated to L-isoleucine by the condensation domain of the NRPS module. Activity of the Dieckmann cyclase domain (RED) of pvhA results in release of an acyclic tetramate. The cytochrome P450 monooxygenase pvhE then catalyzes the oxidation of the C21 methyl group to a to carboxylate group. The methyltransferase pvhD then further methylates the pvhE product. The Diels-Alderase pvhB is able to catalyze Diels-Alder cycloaddition using both pvhE and pvhD products as substrates to form the decalin ring, yielding varicidin B and A, respectively. This Talaromyces variabilis (Penicillium variabile) protein is Cytochrome P450 monooxygenase pvhE.